We begin with the raw amino-acid sequence, 182 residues long: ATP-dependent protease subunit HslV (182 aa).

Thr10 is an active-site residue. Residues Ala166, Cys169, and Ser172 each contribute to the Na(+) site.

The protein belongs to the peptidase T1B family. HslV subfamily. A double ring-shaped homohexamer of HslV is capped on each side by a ring-shaped HslU homohexamer. The assembly of the HslU/HslV complex is dependent on binding of ATP.

Its subcellular location is the cytoplasm. The catalysed reaction is ATP-dependent cleavage of peptide bonds with broad specificity.. Its activity is regulated as follows. Allosterically activated by HslU binding. Its function is as follows. Protease subunit of a proteasome-like degradation complex believed to be a general protein degrading machinery. In Rickettsia africae (strain ESF-5), this protein is ATP-dependent protease subunit HslV.